The following is a 672-amino-acid chain: Protein seu-1 (672 aa).

Disordered regions lie at residues 1 to 463 (MSSI…AGTE) and 576 to 672 (LAPP…LKHL). The segment covering 8 to 20 (NDNRRPTFRDHRT) has biased composition (basic and acidic residues). Residues 25-34 (GRGGSGGGGR) are compositionally biased toward gly residues. Positions 62–85 (RSQDHRQRSPEVRRHRSPEKESKD) are enriched in basic and acidic residues. A compositionally biased stretch (low complexity) spans 87-105 (VVTSTGSSRGATSASVTSS). 4 stretches are compositionally biased toward basic and acidic residues: residues 107–138 (RRHE…DADR), 189–226 (VSRH…KSNG), 234–268 (RRRE…KVED), and 289–306 (EQAK…ESHQ). A compositionally biased stretch (low complexity) spans 307 to 317 (SAHSAAVSNAS). Over residues 322–343 (SEEELDYEEDDIDVDLDGDIDV) the composition is skewed to acidic residues. 6 stretches are compositionally biased toward basic and acidic residues: residues 366–375 (NDVKDETMEE), 382–396 (PEKK…DDKD), 410–424 (RRED…SDHH), 436–447 (RATDHKESRRSE), 607–626 (SFGD…RHMD), and 636–659 (DHRV…ERGF).

Highly expressed in intestinal cells, lateral hypodermal (seam) cells, Pn.p ventral hypodermal cells, and spermatheca. Expressed at low levels in the ventral nerve cord.

The protein resides in the nucleus. Functionally, together with unc-5, involved in touch neuron axon guidance. During gonad morphogenesis, plays a role in the unc-5-/unc-6-mediated migration of distal tip cells along the body. The polypeptide is Protein seu-1 (Caenorhabditis elegans).